Consider the following 491-residue polypeptide: Protein nucleotidyltransferase YdiU (491 aa).

Residues G94, G96, R97, K117, D129, G130, R180, and R187 each contribute to the ATP site. D256 (proton acceptor) is an active-site residue. Residues N257 and D266 each coordinate Mg(2+). D266 serves as a coordination point for ATP.

Belongs to the SELO family. Requires Mg(2+) as cofactor. Mn(2+) is required as a cofactor.

It catalyses the reaction L-seryl-[protein] + ATP = 3-O-(5'-adenylyl)-L-seryl-[protein] + diphosphate. The catalysed reaction is L-threonyl-[protein] + ATP = 3-O-(5'-adenylyl)-L-threonyl-[protein] + diphosphate. It carries out the reaction L-tyrosyl-[protein] + ATP = O-(5'-adenylyl)-L-tyrosyl-[protein] + diphosphate. The enzyme catalyses L-histidyl-[protein] + UTP = N(tele)-(5'-uridylyl)-L-histidyl-[protein] + diphosphate. It catalyses the reaction L-seryl-[protein] + UTP = O-(5'-uridylyl)-L-seryl-[protein] + diphosphate. The catalysed reaction is L-tyrosyl-[protein] + UTP = O-(5'-uridylyl)-L-tyrosyl-[protein] + diphosphate. Nucleotidyltransferase involved in the post-translational modification of proteins. It can catalyze the addition of adenosine monophosphate (AMP) or uridine monophosphate (UMP) to a protein, resulting in modifications known as AMPylation and UMPylation. The sequence is that of Protein nucleotidyltransferase YdiU from Clostridium botulinum (strain Alaska E43 / Type E3).